The chain runs to 352 residues: Ion-translocating oxidoreductase complex subunit D (352 aa).

5 consecutive transmembrane segments (helical) span residues 20-40, 42-62, 78-109, 123-143, and 148-168; these read IMLL…WFFG, GTLV…ALVL, ALLT…VIIA, PAMI…TSWL, and IAVN…GHTA. Threonine 187 carries the post-translational modification FMN phosphoryl threonine. 5 helical membrane passes run 214–234, 242–262, 267–287, 301–321, and 322–342; these read ILAG…GVWL, WHIP…GWLF, LAAP…FFIL, LIFG…GGYP, and DGVA…DYYT.

Belongs to the NqrB/RnfD family. The complex is composed of six subunits: RsxA, RsxB, RsxC, RsxD, RsxE and RsxG. It depends on FMN as a cofactor.

The protein resides in the cell inner membrane. In terms of biological role, part of a membrane-bound complex that couples electron transfer with translocation of ions across the membrane. Required to maintain the reduced state of SoxR. This Escherichia coli O139:H28 (strain E24377A / ETEC) protein is Ion-translocating oxidoreductase complex subunit D.